The chain runs to 239 residues: tRNA pseudouridine synthase C (239 aa).

Residue D54 is part of the active site.

The protein belongs to the pseudouridine synthase RluA family.

It catalyses the reaction uridine(65) in tRNA = pseudouridine(65) in tRNA. Functionally, responsible for synthesis of pseudouridine from uracil-65 in transfer RNAs. The protein is tRNA pseudouridine synthase C (truC) of Haemophilus influenzae (strain ATCC 51907 / DSM 11121 / KW20 / Rd).